A 372-amino-acid chain; its full sequence is GTPase Obg (372 aa).

The region spanning 1–159 (MKFIDEARIE…RMLKLELKVL (159 aa)) is the Obg domain. The tract at residues 128–147 (LHFKSSTNRAPRQKTDGKPG) is disordered. The region spanning 160 to 334 (ADVGLLGMPN…LVYAIHDYLV (175 aa)) is the OBG-type G domain. GTP-binding positions include 166–173 (GMPNAGKS), 191–195 (FTTLA), 213–216 (DIPG), 284–287 (NKLD), and 315–317 (SAL). 2 residues coordinate Mg(2+): Ser-173 and Thr-193.

It belongs to the TRAFAC class OBG-HflX-like GTPase superfamily. OBG GTPase family. Monomer. Mg(2+) is required as a cofactor.

The protein localises to the cytoplasm. Its function is as follows. An essential GTPase which binds GTP, GDP and possibly (p)ppGpp with moderate affinity, with high nucleotide exchange rates and a fairly low GTP hydrolysis rate. Plays a role in control of the cell cycle, stress response, ribosome biogenesis and in those bacteria that undergo differentiation, in morphogenesis control. The protein is GTPase Obg of Burkholderia mallei (strain NCTC 10247).